A 34-amino-acid polypeptide reads, in one-letter code: Potassium channel toxin alpha-KTx 18.2 (34 aa).

Intrachain disulfides connect C7–C26, C12–C31, and C16–C33.

In terms of tissue distribution, expressed by the venom gland.

The protein resides in the secreted. Its function is as follows. Reversibly blocks Shaker B potassium channels. In Tityus discrepans (Venezuelan scorpion), this protein is Potassium channel toxin alpha-KTx 18.2.